Here is a 408-residue protein sequence, read N- to C-terminus: Triose phosphate/phosphate translocator, chloroplastic (408 aa).

Residues 1 to 82 (MESRVLSSGA…VKRDVLKPCT (82 aa)) constitute a chloroplast transit peptide. Over 83–102 (ATASDSAGDAAPVGFFAKYP) the chain is Chloroplast intermembrane. A helical membrane pass occupies residues 103-123 (FLVTGFFFFMWYFLNVIFNIL). Over 124–135 (NKKIYNYFPYPY) the chain is Lumenal. Residues 136 to 156 (FVSAIHLAVGVVYCLGGWAVG) form a helical membrane-spanning segment. The Chloroplast intermembrane portion of the chain corresponds to 157–213 (LPKRAPMDSNLLKLLIPVAFCHALGHVTSNVSFAAVAVSFTHTIKSLEPFFNAAASQ). A helical transmembrane segment spans residues 214–234 (FILGQSIPITLWLSLAPVVIG). Topologically, residues 235–278 (VSMASLTELSFNWLGFISAMISNISFTYRSIYSKKAMTDMDSTN) are lumenal. Residues 279-298 (LYAYISIISLLFCIPPAIIL) form a helical membrane-spanning segment. Topologically, residues 299–376 (EGPQLLKHGF…IVFGNKISTQ (78 aa)) are chloroplast intermembrane. The chain crosses the membrane as a helical span at residues 377-397 (TAIGTSIAIAGVAVYSLIKAK). Residues 398–408 (IEEEKRGLKSA) lie on the Lumenal side of the membrane.

This sequence belongs to the TPT transporter family. TPT (TC 2.A.7.9) subfamily. As to quaternary structure, homodimer.

Its subcellular location is the plastid. It is found in the chloroplast membrane. Its function is as follows. Mediates the export of fixed carbons from the chloroplasts into the cytosol in the form of triose phosphates. The chain is Triose phosphate/phosphate translocator, chloroplastic (TPT) from Flaveria pringlei.